Consider the following 387-residue polypeptide: Alpha-2B adrenergic receptor (387 aa).

A helical membrane pass occupies residues 1–25 (AIAAVITFLILFTIFGNALVILAVL). Topologically, residues 26–36 (TSRSLRAPQNL) are cytoplasmic. Residues 37–62 (FLVSLAAADILVATLIIPFSLANELL) traverse the membrane as a helical segment. Topologically, residues 63–72 (GYWYFRHTWC) are extracellular. Cys-72 and Cys-151 are joined by a disulfide. A helical membrane pass occupies residues 73 to 95 (XVYLALDVLFCTSSIVHLCAISL). Residues 96 to 117 (DRYWAVSRALEYNSKRTPRRIK) are Cytoplasmic-facing. The chain crosses the membrane as a helical span at residues 118–140 (CIILTVWLIAAAISLPPLIYKGD). The Extracellular portion of the chain corresponds to 141-156 (QDPQPRGRPQCKLNQE). A helical transmembrane segment spans residues 157 to 180 (AWYILSSSIGSFFVPCLIMILVYL). Topologically, residues 181 to 351 (RIYLIAKRSS…LTREKRFTFV (171 aa)) are cytoplasmic. The interval 193–303 (RKPRAKGXPR…VPASPALACS (111 aa)) is disordered. Positions 279–290 (PEEEAEEEEECG) are enriched in acidic residues. Residues 352 to 375 (LAVVIGVFVLCWFPFFFSYSLGAI) traverse the membrane as a helical segment. At 376-384 (CPQHCKVPH) the chain is on the extracellular side. Residues 385-387 (GLF) form a helical membrane-spanning segment.

Belongs to the G-protein coupled receptor 1 family. Adrenergic receptor subfamily. ADRA2B sub-subfamily. As to quaternary structure, interacts with RAB26. Interacts with PPP1R9B. Interacts with GGA1, GGA2 and GGA3.

It is found in the cell membrane. In terms of biological role, alpha-2 adrenergic receptors mediate the catecholamine-induced inhibition of adenylate cyclase through the action of G proteins. The protein is Alpha-2B adrenergic receptor (ADRA2B) of Macroscelides proboscideus (Short-eared elephant shrew).